We begin with the raw amino-acid sequence, 385 residues long: 8-amino-7-oxononanoate synthase (385 aa).

Arg-21 contributes to the substrate binding site. 108 to 109 (GF) serves as a coordination point for pyridoxal 5'-phosphate. His-133 is a substrate binding site. Ser-179, His-207, and Thr-233 together coordinate pyridoxal 5'-phosphate. Lys-236 carries the N6-(pyridoxal phosphate)lysine modification. Residue Thr-352 participates in substrate binding.

It belongs to the class-II pyridoxal-phosphate-dependent aminotransferase family. BioF subfamily. Homodimer. It depends on pyridoxal 5'-phosphate as a cofactor.

It carries out the reaction 6-carboxyhexanoyl-[ACP] + L-alanine + H(+) = (8S)-8-amino-7-oxononanoate + holo-[ACP] + CO2. It participates in cofactor biosynthesis; biotin biosynthesis. In terms of biological role, catalyzes the decarboxylative condensation of pimeloyl-[acyl-carrier protein] and L-alanine to produce 8-amino-7-oxononanoate (AON), [acyl-carrier protein], and carbon dioxide. The chain is 8-amino-7-oxononanoate synthase from Salmonella typhimurium (strain LT2 / SGSC1412 / ATCC 700720).